Consider the following 280-residue polypeptide: Protease HtpX (280 aa).

Helical transmembrane passes span 7-26 (TFILLASLTALLVVIGGLLG) and 30-49 (GMLIALVFAGVMNFSAYWYS). A Zn(2+)-binding site is contributed by His-129. The active site involves Glu-130. Residue His-133 coordinates Zn(2+). The next 2 helical transmembrane spans lie at 146–166 (ATIAGAISGIANMFMWLSMFG) and 178–198 (VVGMIMMIVAPLAAGLIQMAI). Glu-203 contacts Zn(2+).

It belongs to the peptidase M48B family. Requires Zn(2+) as cofactor.

The protein resides in the cell inner membrane. This chain is Protease HtpX, found in Legionella pneumophila subsp. pneumophila (strain Philadelphia 1 / ATCC 33152 / DSM 7513).